A 230-amino-acid polypeptide reads, in one-letter code: MKTIGLLGGMSWESTIPYYRLINEGIKQRLGGLHSAQVLLHSVDFHEIEECQRRGEWDKTGDILAEAALGLQRAGAEGIVLCTNTMHKVADAIESRCTLPFLHIADATGRAITGAGMTRVALLGTRYTMEQDFYRGRLTEQFSINCLIPEADERAKINQIIFEELCLGQFTEASRAYYAQVIARLAEQGAQGVIFGCTEIGLLVPEERSVLPVFDTAAIHAEDAVAFMLS.

Substrate contacts are provided by residues Met10, Gln52, and 83 to 85 (TNT). Thr83 acts as the Proton donor in catalysis. Catalysis depends on Cys197, which acts as the Proton acceptor. Position 198–199 (198–199 (TE)) interacts with substrate.

The protein belongs to the aspartate/glutamate racemases family. Homodimer.

The enzyme catalyses L-glutamate = D-glutamate. The catalysed reaction is L-aspartate = D-aspartate. In terms of biological role, exhibits racemase activity for both L-glutamate and L-aspartate. This chain is L-aspartate/glutamate-specific racemase, found in Escherichia coli O157:H7.